Here is a 458-residue protein sequence, read N- to C-terminus: tRNA modification GTPase MnmE (458 aa).

Residues Arg22, Glu84, and Arg123 each coordinate (6S)-5-formyl-5,6,7,8-tetrahydrofolate. Positions 220-379 constitute a TrmE-type G domain; the sequence is GISTAIIGRP…LEKAIADLFF (160 aa). Asn230 is a K(+) binding site. GTP is bound by residues 230-235, 249-255, and 274-277; these read NVGKSS, TDIAGTT, and DTAG. Ser234 provides a ligand contact to Mg(2+). Residues Thr249, Ile251, and Thr254 each contribute to the K(+) site. Thr255 is a binding site for Mg(2+). A (6S)-5-formyl-5,6,7,8-tetrahydrofolate-binding site is contributed by Lys458.

The protein belongs to the TRAFAC class TrmE-Era-EngA-EngB-Septin-like GTPase superfamily. TrmE GTPase family. In terms of assembly, homodimer. Heterotetramer of two MnmE and two MnmG subunits. The cofactor is K(+).

The protein localises to the cytoplasm. In terms of biological role, exhibits a very high intrinsic GTPase hydrolysis rate. Involved in the addition of a carboxymethylaminomethyl (cmnm) group at the wobble position (U34) of certain tRNAs, forming tRNA-cmnm(5)s(2)U34. The polypeptide is tRNA modification GTPase MnmE (Bacillus mycoides (strain KBAB4) (Bacillus weihenstephanensis)).